The chain runs to 135 residues: Cytochrome b5 (135 aa).

A Cytochrome b5 heme-binding domain is found at 4–80 (SKVYSLAEVS…MDEMCVGDID (77 aa)). Residues His-39 and His-63 each contribute to the heme site. Residues 106–126 (FIIKLLQFLVPLIILGVAVGI) form a helical membrane-spanning segment.

This sequence belongs to the cytochrome b5 family.

It is found in the endoplasmic reticulum membrane. It localises to the microsome membrane. Its function is as follows. Membrane bound hemoprotein which function as an electron carrier for several membrane bound oxygenases. The sequence is that of Cytochrome b5 from Cuscuta reflexa (Southern Asian dodder).